A 111-amino-acid polypeptide reads, in one-letter code: Small ribosomal subunit protein bS16 (111 aa).

Residues 92 to 111 (MDVKAKNRKARSSKQEAKEA) are disordered.

The protein belongs to the bacterial ribosomal protein bS16 family.

The protein is Small ribosomal subunit protein bS16 of Rickettsia akari (strain Hartford).